A 970-amino-acid polypeptide reads, in one-letter code: Protein tweety (970 aa).

Residues 1–47 are Extracellular-facing; sequence MGDYHEFTDQYKVPVIAKLLHALPHYNITFHKINSTFRPNDEIYLES. Asn27 and Asn34 each carry an N-linked (GlcNAc...) asparagine glycan. A helical membrane pass occupies residues 48-68; the sequence is LGILGSVPAALLIVSLLGLLF. At 69-89 the chain is on the cytoplasmic side; that stretch reads YLMTRCCDRKPRPAHSITSLK. The helical transmembrane segment at 90–110 threads the bilayer; the sequence is VALSIVTVMCCAAIGLGLYGN. The Extracellular segment spans residues 111 to 219; sequence DDLHNGLLEV…GDQWELIRWP (109 aa). Residues Asn136, Asn166, and Asn183 are each glycosylated (N-linked (GlcNAc...) asparagine). A helical transmembrane segment spans residues 220 to 240; it reads GTVATLALLLVLCAVLLVGVA. Residues 241-246 are Cytoplasmic-facing; that stretch reads RHSRCA. A helical membrane pass occupies residues 247–267; the sequence is LILFSVCGLLAVTGSWLMSGL. Topologically, residues 268 to 395 are extracellular; that stretch reads YLSSSVAVGD…RGLCEGGLLG (128 aa). Residue Asn359 is glycosylated (N-linked (GlcNAc...) asparagine). The helical transmembrane segment at 396 to 416 threads the bilayer; sequence LVLMLIASFIAAILLTIMVWV. Topologically, residues 417–970 are cytoplasmic; it reads DSHTWIYIRK…DESNYAVTEL (554 aa). Positions 532 to 571 are enriched in low complexity; the sequence is NAAANMPPTTQAAQQQQQQQAQQQQQQAQQQLGGPQPIYC. Disordered regions lie at residues 532–587, 677–763, and 849–970; these read NAAA…QHPH, RQNS…NESD, and MKAI…VTEL. Residues 572–587 are compositionally biased toward basic residues; sequence HHPHQHPHPHPHQHPH. 3 stretches are compositionally biased toward low complexity: residues 689 to 700, 707 to 737, and 745 to 759; these read HQHPPSLHQQQQ, QQQQQLHQLKSPQQHQQQLQQHQQQQQQQHH, and QHQQQQQQHHQQQQP. The segment covering 852 to 868 has biased composition (pro residues); sequence IPPPRIGTPTSPPPPVA. Composition is skewed to gly residues over residues 883-894 and 931-945; these read QNGGAVVGGGGA and NGGGGGSVGGGGGGA. Positions 961-970 are enriched in polar residues; sequence DESNYAVTEL.

It belongs to the tweety family.

Its subcellular location is the cell membrane. In terms of biological role, non-essential protein that probably acts as a chloride channel. The chain is Protein tweety (tty) from Drosophila melanogaster (Fruit fly).